Reading from the N-terminus, the 606-residue chain is Serine/threonine-protein kinase A-Raf (606 aa).

Positions 19-91 (GTVKVYLPNK…DGEELIVEVL (73 aa)) constitute an RBD domain. A Phorbol-ester/DAG-type zinc finger spans residues 98-144 (MHNFVRKTFFSLAFCDFCLKFLFHGFRCQTCGYKFHQHCSSKVPTVC). Zn(2+)-binding residues include histidine 99, cysteine 112, cysteine 115, cysteine 125, cysteine 128, histidine 133, cysteine 136, and cysteine 144. Phosphoserine is present on residues serine 157 and serine 162. Disordered regions lie at residues 158 to 207 (VQDL…NAPL) and 241 to 290 (TDAA…DKKK). Position 181 is a phosphothreonine (threonine 181). Phosphoserine occurs at positions 186, 257, and 269. Over residues 254 to 267 (PRGSPSPASVSSGR) the composition is skewed to low complexity. Over residues 274-289 (SPSEQRERKSLADDKK) the composition is skewed to basic and acidic residues. The 261-residue stretch at 310 to 570 (VQLLKRIGTG…PQILATIELL (261 aa)) folds into the Protein kinase domain. Residues 316-324 (IGTGSFGTV) and lysine 336 contribute to the ATP site. Phosphothreonine is present on threonine 318. The Proton acceptor role is filled by aspartate 429.

The protein belongs to the protein kinase superfamily. TKL Ser/Thr protein kinase family. RAF subfamily. In terms of assembly, interacts with TH1L/NELFD. The cofactor is Zn(2+). Post-translationally, dephosphorylation by the SHOC2-MRAS-PP1c (SMP) complex consisting of SHOC2, GTP-bound M-Ras/MRAS and the catalytic subunit of protein phosphatase 1 (PPP1CA, PPP1CB or PPP1CC); this relieves inactivation and stimulates kinase activity.

It catalyses the reaction L-seryl-[protein] + ATP = O-phospho-L-seryl-[protein] + ADP + H(+). The catalysed reaction is L-threonyl-[protein] + ATP = O-phospho-L-threonyl-[protein] + ADP + H(+). Its function is as follows. Involved in the transduction of mitogenic signals from the cell membrane to the nucleus. May also regulate the TOR signaling cascade. Phosphorylates PFKFB2. This is Serine/threonine-protein kinase A-Raf (ARAF) from Sus scrofa (Pig).